The sequence spans 176 residues: Peptidyl-prolyl cis-trans isomerase cyp6 (176 aa).

The 164-residue stretch at 10–173 folds into the PPIase cyclophilin-type domain; sequence FFDIAVNGQH…AKIEITDCGE (164 aa).

Belongs to the cyclophilin-type PPIase family.

It carries out the reaction [protein]-peptidylproline (omega=180) = [protein]-peptidylproline (omega=0). Its function is as follows. PPIases accelerate the folding of proteins. It catalyzes the cis-trans isomerization of proline imidic peptide bonds in oligopeptides. The sequence is that of Peptidyl-prolyl cis-trans isomerase cyp6 (cyp6) from Rhizopus delemar (strain RA 99-880 / ATCC MYA-4621 / FGSC 9543 / NRRL 43880) (Mucormycosis agent).